We begin with the raw amino-acid sequence, 368 residues long: C6 finger domain transcription factor tcpZ (368 aa).

A DNA-binding region (zn(2)-C6 fungal-type) is located at residues 30–56 (CDACHASKVRCSGEPICARCQRDNVAC). Residues 84 to 109 (FIEQRQRPAASQPPGHGTSRDSSVCA) form a disordered region.

The protein resides in the nucleus. Transcription factor that specifically regulates the thioclapurine biosynthesis gene cluster. In Claviceps purpurea (strain 20.1) (Ergot fungus), this protein is C6 finger domain transcription factor tcpZ.